A 170-amino-acid chain; its full sequence is Protein SprT (170 aa).

In terms of domain architecture, SprT-like spans 22–163 (LQQANLTLQT…RCRRCGKTLR (142 aa)). Histidine 78 provides a ligand contact to Zn(2+). Residue glutamate 79 is part of the active site. Position 82 (histidine 82) interacts with Zn(2+).

The protein belongs to the SprT family. The cofactor is Zn(2+).

The protein resides in the cytoplasm. This chain is Protein SprT, found in Pectobacterium atrosepticum (strain SCRI 1043 / ATCC BAA-672) (Erwinia carotovora subsp. atroseptica).